Here is a 140-residue protein sequence, read N- to C-terminus: Nucleoside diphosphate kinase (140 aa).

ATP contacts are provided by Lys11, Phe59, Arg87, Thr93, Arg104, and Asn114. His117 serves as the catalytic Pros-phosphohistidine intermediate.

This sequence belongs to the NDK family. Homotetramer. It depends on Mg(2+) as a cofactor.

The protein localises to the cytoplasm. The catalysed reaction is a 2'-deoxyribonucleoside 5'-diphosphate + ATP = a 2'-deoxyribonucleoside 5'-triphosphate + ADP. It catalyses the reaction a ribonucleoside 5'-diphosphate + ATP = a ribonucleoside 5'-triphosphate + ADP. In terms of biological role, major role in the synthesis of nucleoside triphosphates other than ATP. The ATP gamma phosphate is transferred to the NDP beta phosphate via a ping-pong mechanism, using a phosphorylated active-site intermediate. The sequence is that of Nucleoside diphosphate kinase from Rhizorhabdus wittichii (strain DSM 6014 / CCUG 31198 / JCM 15750 / NBRC 105917 / EY 4224 / RW1) (Sphingomonas wittichii).